A 131-amino-acid polypeptide reads, in one-letter code: Large ribosomal subunit protein bL12c (131 aa).

Residues 106–125 are compositionally biased toward basic and acidic residues; the sequence is KDNTNKENSEEIKQQLEEAG. Residues 106 to 131 are disordered; it reads KDNTNKENSEEIKQQLEEAGAKVSIK.

Belongs to the bacterial ribosomal protein bL12 family. Homodimer. Part of the ribosomal stalk of the 50S ribosomal subunit. Forms a multimeric L10(L12)X complex, where L10 forms an elongated spine to which 2 to 4 L12 dimers bind in a sequential fashion. Binds GTP-bound translation factors.

The protein localises to the plastid. Its subcellular location is the chloroplast. Its function is as follows. Forms part of the ribosomal stalk which helps the ribosome interact with GTP-bound translation factors. Is thus essential for accurate translation. The sequence is that of Large ribosomal subunit protein bL12c from Gracilaria tenuistipitata var. liui (Red alga).